The sequence spans 359 residues: Protein PAM71-homolog, chloroplastic (359 aa).

Residues 1 to 66 constitute a chloroplast transit peptide; the sequence is MKLTSLSKNA…DLLWGKFRVR (66 aa). Residues 71–102 form a disordered region; the sequence is GVGSGSYSGGEEDGSQSSSLDQSPATSSESLK. Residues 85–98 show a composition bias toward low complexity; sequence SQSSSLDQSPATSS. 7 consecutive transmembrane segments (helical) span residues 110-130, 149-169, 177-197, 207-227, 269-289, 311-331, and 339-359; these read SLSIALVLLSCGLVFSLITFV, AFSLIFVSEIGDKTFFIAALL, LVLLGSMGALSLMTILSVVIG, FQTTLPIGEYAAIALLMFFGL, LTNPLEILWKSFSLVFFAEWG, GAIAGHLVATVLAIMGGAFLA, and VGYVGGALFLVFAAATFFGVF.

This sequence belongs to the GDT1 family.

Its subcellular location is the plastid. It is found in the chloroplast membrane. In terms of biological role, probable chloroplast-localized Mn(2+)/H(+) and/or Ca(2+)/H(+) antiporter regulating Ca(2+), Mn(2+) and pH homeostasis. In Arabidopsis thaliana (Mouse-ear cress), this protein is Protein PAM71-homolog, chloroplastic.